Here is a 208-residue protein sequence, read N- to C-terminus: Small ribosomal subunit protein uS4 (208 aa).

The interval Ser-31–Ser-51 is disordered. One can recognise an S4 RNA-binding domain in the interval Arg-98–Ala-160.

Belongs to the universal ribosomal protein uS4 family. Part of the 30S ribosomal subunit. Contacts protein S5. The interaction surface between S4 and S5 is involved in control of translational fidelity.

Its function is as follows. One of the primary rRNA binding proteins, it binds directly to 16S rRNA where it nucleates assembly of the body of the 30S subunit. In terms of biological role, with S5 and S12 plays an important role in translational accuracy. In Helicobacter pylori (strain ATCC 700392 / 26695) (Campylobacter pylori), this protein is Small ribosomal subunit protein uS4.